Consider the following 466-residue polypeptide: tRNA-2-methylthio-N(6)-dimethylallyladenosine synthase (466 aa).

An MTTase N-terminal domain is found at 3–123 (KKLYIKTYGC…LPEMVARAVR (121 aa)). [4Fe-4S] cluster is bound by residues Cys-12, Cys-48, Cys-86, Cys-162, Cys-166, and Cys-169. The Radical SAM core domain maps to 148 to 381 (SPAGPSAFLS…QQLLTAQQTA (234 aa)). The TRAM domain occupies 384-446 (TACVGRVQPV…ANSLSGTVVV (63 aa)).

The protein belongs to the methylthiotransferase family. MiaB subfamily. As to quaternary structure, monomer. [4Fe-4S] cluster is required as a cofactor.

The protein resides in the cytoplasm. The catalysed reaction is N(6)-dimethylallyladenosine(37) in tRNA + (sulfur carrier)-SH + AH2 + 2 S-adenosyl-L-methionine = 2-methylsulfanyl-N(6)-dimethylallyladenosine(37) in tRNA + (sulfur carrier)-H + 5'-deoxyadenosine + L-methionine + A + S-adenosyl-L-homocysteine + 2 H(+). Functionally, catalyzes the methylthiolation of N6-(dimethylallyl)adenosine (i(6)A), leading to the formation of 2-methylthio-N6-(dimethylallyl)adenosine (ms(2)i(6)A) at position 37 in tRNAs that read codons beginning with uridine. In Rhodospirillum centenum (strain ATCC 51521 / SW), this protein is tRNA-2-methylthio-N(6)-dimethylallyladenosine synthase.